We begin with the raw amino-acid sequence, 517 residues long: Protein MGF 505-2R (517 aa).

Belongs to the asfivirus MGF 505 family.

Its function is as follows. Plays a role in virus cell tropism, and may be required for efficient virus replication in macrophages. This chain is Protein MGF 505-2R, found in Ornithodoros (relapsing fever ticks).